The primary structure comprises 360 residues: Mannonate dehydratase (360 aa).

The protein belongs to the mannonate dehydratase family. Requires Fe(2+) as cofactor. Mn(2+) is required as a cofactor.

The catalysed reaction is D-mannonate = 2-dehydro-3-deoxy-D-gluconate + H2O. Its pathway is carbohydrate metabolism; pentose and glucuronate interconversion. Functionally, catalyzes the dehydration of D-mannonate. The sequence is that of Mannonate dehydratase (uxuA) from Thermotoga maritima (strain ATCC 43589 / DSM 3109 / JCM 10099 / NBRC 100826 / MSB8).